The primary structure comprises 556 residues: Arginine--tRNA ligase (556 aa).

The 'HIGH' region motif lies at 132 to 142 (ANPTGDLHLGH).

Belongs to the class-I aminoacyl-tRNA synthetase family. In terms of assembly, monomer.

It is found in the cytoplasm. The catalysed reaction is tRNA(Arg) + L-arginine + ATP = L-arginyl-tRNA(Arg) + AMP + diphosphate. The sequence is that of Arginine--tRNA ligase from Listeria monocytogenes serotype 4b (strain CLIP80459).